Here is a 364-residue protein sequence, read N- to C-terminus: Metalloendoproteinase 1-MMP (364 aa).

Residues 1-28 (MSRNLIYRRNRALCFVLILFCFPYRFGA) form the signal peptide. The propeptide at 29-149 (RNTPEAEQST…NNDFLHTTAH (121 aa)) is activation peptide. Asn-49 carries N-linked (GlcNAc...) asparagine glycosylation. The short motif at 128–135 (PRCGVSDT) is the Cysteine switch element. Cys-130 serves as a coordination point for Zn(2+). Position 211 (Asp-211) interacts with Ca(2+). 2 residues coordinate Zn(2+): His-221 and Asp-223. Ca(2+) is bound by residues Asp-228 and Gly-229. Residue His-236 coordinates Zn(2+). Gly-243 contacts Ca(2+). His-246 is a binding site for Zn(2+). The Ca(2+) site is built by Asp-248 and Glu-251. Residue His-275 participates in Zn(2+) binding. Glu-276 is a catalytic residue. Residues His-279 and His-285 each contribute to the Zn(2+) site. N-linked (GlcNAc...) asparagine glycosylation occurs at Asn-338. Gly-339 carries GPI-anchor amidated glycine lipidation. Positions 340–364 (TVSHRFLSGNFIGYVLLVVGLILFL) are cleaved as a propeptide — removed in mature form.

It belongs to the peptidase M10A family. Matrix metalloproteinases (MMPs) subfamily. Ca(2+) serves as cofactor. Requires Zn(2+) as cofactor. Mostly expressed in flowers, roots and stems, and, to a lower extent, in leaves.

Its subcellular location is the cell membrane. Its activity is regulated as follows. Inhibited by human TIMP-1 and TIMP-2 and by the peptide hydroxamate inhibitor (BB-94). Repressed by acetohydroxamic acid (AHA). In terms of biological role, matrix metalloproteinases (MMPs) or matrixins may play a role in the degradation and remodeling of the extracellular matrix (ECM) during development or in response to stresses. Can cleave myelin basic protein as well as fluorigenic peptide substrates, McaPLANvaDpaAR-NH(2) and McaPChaGNvaHADpa-NH(2) 4-fold more efficiently than McaPLGLDpaAR-NH(2) (QF24). Active on myelin basic protein (MBP) and, to some extent, on McaPLGLDpaAR-NH(2) (QF24) and beta-casein. The protein is Metalloendoproteinase 1-MMP of Arabidopsis thaliana (Mouse-ear cress).